We begin with the raw amino-acid sequence, 135 residues long: uncharacterized protein (135 aa).

Residues 1 to 36 (MSHAEKPMSDSVNHHHHRTFEVLTAEPVRSRRKPRH) are disordered.

Belongs to the transposase 8 family.

This is an uncharacterized protein from Sinorhizobium fredii (strain NBRC 101917 / NGR234).